We begin with the raw amino-acid sequence, 71 residues long: ATP synthase subunit c (71 aa).

The next 2 helical transmembrane spans lie at 4–24 (AVIGAGIAVLTGLGAGIGIGI) and 48–68 (IIGAGLAEATAIYGLIIAFMI).

This sequence belongs to the ATPase C chain family. F-type ATPases have 2 components, F(1) - the catalytic core - and F(0) - the membrane proton channel. F(1) has five subunits: alpha(3), beta(3), gamma(1), delta(1), epsilon(1). F(0) has three main subunits: a(1), b(2) and c(10-14). The alpha and beta chains form an alternating ring which encloses part of the gamma chain. F(1) is attached to F(0) by a central stalk formed by the gamma and epsilon chains, while a peripheral stalk is formed by the delta and b chains.

It is found in the cell membrane. F(1)F(0) ATP synthase produces ATP from ADP in the presence of a proton or sodium gradient. F-type ATPases consist of two structural domains, F(1) containing the extramembraneous catalytic core and F(0) containing the membrane proton channel, linked together by a central stalk and a peripheral stalk. During catalysis, ATP synthesis in the catalytic domain of F(1) is coupled via a rotary mechanism of the central stalk subunits to proton translocation. Functionally, key component of the F(0) channel; it plays a direct role in translocation across the membrane. A homomeric c-ring of between 10-14 subunits forms the central stalk rotor element with the F(1) delta and epsilon subunits. In Clostridium botulinum (strain Alaska E43 / Type E3), this protein is ATP synthase subunit c.